The primary structure comprises 245 residues: uncharacterized protein (245 aa).

Positions 29–96 (RSLIEATFQR…AQRGFHVTPM (68 aa)) constitute an HTH gntR-type domain. Positions 56–75 (IEDLKSRYEVSGGTVREALS) form a DNA-binding region, H-T-H motif.

This is an uncharacterized protein from Paraburkholderia xenovorans (strain LB400).